The sequence spans 316 residues: tRNA uridine(34) hydroxylase (316 aa).

Residues 136 to 230 (ADENTVVVDK…YLEEVPREQS (95 aa)) form the Rhodanese domain. Residue C190 is the Cysteine persulfide intermediate of the active site.

This sequence belongs to the TrhO family.

The catalysed reaction is uridine(34) in tRNA + AH2 + O2 = 5-hydroxyuridine(34) in tRNA + A + H2O. Its function is as follows. Catalyzes oxygen-dependent 5-hydroxyuridine (ho5U) modification at position 34 in tRNAs. The protein is tRNA uridine(34) hydroxylase of Brucella abortus (strain 2308).